Here is a 563-residue protein sequence, read N- to C-terminus: AP-1-like transcription factor yap1 (563 aa).

Residues 23 to 179 (LAALSSNQPP…AFRERKEKHL (157 aa)) form a disordered region. The Bipartite nuclear localization signal signature appears at 35–42 (QQNDKQRS). Residues 36–48 (QNDKQRSQAKTDP) show a composition bias toward basic and acidic residues. The segment covering 52–67 (PGNMSSGSFSMSPGFN) has biased composition (low complexity). The Bipartite nuclear localization signal signature appears at 68–75 (KTHPGSGG). A compositionally biased stretch (acidic residues) spans 79–94 (GDDESPFLDFNPELDF). Basic and acidic residues-rich tracts occupy residues 112-144 (SEEH…DKAA) and 170-179 (AFRERKEKHL). Residues 154-217 (SEPTSKRKAQ…ERLQVELREY (64 aa)) enclose the bZIP domain. Residues 159–180 (KRKAQNRAAQRAFRERKEKHLK) form a basic motif region. The leucine-zipper stretch occupies residues 182-189 (LETKVDEL). Positions 211–332 (QVELREYRKR…PSPKVPSVYN (122 aa)) are transcription activation 1. Disordered stretches follow at residues 267–380 (IFNG…KLND) and 394–420 (DAVR…TPGP). The tract at residues 284–296 (SSPATSDSQVPGV) is n-CRD. The span at 300–309 (ETLNGSNNRG) shows a compositional bias: polar residues. The segment covering 336-362 (SASSHDSSNSCSPSSSSDSHQSQMLSS) has biased composition (low complexity). Composition is skewed to polar residues over residues 363–380 (NGTS…KLND) and 401–416 (ESVS…NYEQ). The interval 377-459 (KLNDSVQNHH…SQDFGTFFDD (83 aa)) is transcription activation 2. Cystine bridges form between cysteine 510–cysteine 534, cysteine 510–cysteine 543, and cysteine 534–cysteine 543. Residues 510-543 (CTKIWDRLQSMEKFRNGEIDVDNLCSELRTKARC) are c-CRD. The Nuclear export signal signature appears at 528–535 (IDVDNLCS).

This sequence belongs to the bZIP family. YAP subfamily. Depending on the oxidative stress inducing agent, yap1 can undergo two distinct conformational changes, both involving disulfide bond formation, and both masking the nuclear export signal, thus abolishing nuclear export.

The protein localises to the nucleus. Its subcellular location is the cytoplasm. Transcription activator involved in oxidative stress response and redox homeostasis. Regulates the transcription of genes encoding antioxidant enzymes and components of the cellular thiol-reducing pathways. This chain is AP-1-like transcription factor yap1, found in Aspergillus oryzae (strain ATCC 42149 / RIB 40) (Yellow koji mold).